The following is a 201-amino-acid chain: Recombination protein RecR (201 aa).

The C4-type zinc finger occupies 57-74; sequence CRICGNITENSVNPCAIC. The Toprim domain maps to 82 to 178; sequence STVFVVENSR…KVTRLAHGLA (97 aa).

Belongs to the RecR family.

Its function is as follows. May play a role in DNA repair. It seems to be involved in an RecBC-independent recombinational process of DNA repair. It may act with RecF and RecO. This is Recombination protein RecR from Leuconostoc citreum (strain KM20).